Here is a 198-residue protein sequence, read N- to C-terminus: Suppressor of cytokine signaling 2 (198 aa).

A disordered region spans residues 1-31 (MTLRCLEPSGNGAEGTQSQWGTSGSAEEPSP). The segment at 1-75 (MTLRCLEPSG…PEGTFLIRDS (75 aa)) is interaction with AREL1. Polar residues predominate over residues 14 to 25 (EGTQSQWGTSGS). Phosphoserine is present on residues S30 and S52. One can recognise an SH2 domain in the interval 48–156 (WYWGSMTVNE…TVHLYLTKPL (109 aa)). The 47-residue stretch at 151-197 (YLTKPLYTSAPPLQHLCRLTINKCTGTIWGLPLPTRLKDYLEEYKFQ) folds into the SOCS box domain. K173 is covalently cross-linked (Glycyl lysine isopeptide (Lys-Gly) (interchain with G-Cter in ubiquitin)).

As to quaternary structure, substrate-recognition component of the ECS(SOCS2) complex, composed of SOCS2, CUL5, ELOB, ELOC and RNF7/RBX2. Interacts with IGF1R. Interacts with DCUN1D1. In terms of processing, ubiquitinated; mediated by AREL1 and leading to its subsequent proteasomal degradation. Ubiquitination is dependent on its phosphorylation at Ser-52, by PKC. Ubiquitination is stimulated by LPS. Post-translationally, phosphorylation at Ser-52 by PKC facilitates its ubiquitination and proteasomal degradation.

The protein resides in the cytoplasm. Its pathway is protein modification; protein ubiquitination. Its function is as follows. Substrate-recognition component of a cullin-5-RING E3 ubiquitin-protein ligase complex (ECS complex, also named CRL5 complex), which mediates the ubiquitination and subsequent proteasomal degradation of target proteins, such as EPOR and GHR. Specifically recognizes and binds phosphorylated proteins via its SH2 domain, promoting their ubiquitination. The ECS(SOCS2) complex acts as a key regulator of growth hormone receptor (GHR) levels by mediating ubiquitination and degradation of GHR, following GHR phosphorylation by JAK2. The ECS(SOCS2) also catalyzes ubiquitination and degradation of JAK2-phosphorylated EPOR. The polypeptide is Suppressor of cytokine signaling 2 (SOCS2) (Sus scrofa (Pig)).